We begin with the raw amino-acid sequence, 245 residues long: Polynucleotide 3'-phosphatase (245 aa).

Belongs to the DNA 3' phosphatase family.

Its subcellular location is the nucleus. The catalysed reaction is a 3'end (2'-deoxyribonucleotide 3'-phosphate)-DNA + H2O = a 3'-end 2'-deoxyribonucleotide-DNA + phosphate. Functionally, dephosphorylate DNA's 3'-phosphate termini. Has a role in the repair of breaks in single-stranded DNA. This is Polynucleotide 3'-phosphatase (TPP1) from Saccharomyces mikatae (Yeast).